Reading from the N-terminus, the 110-residue chain is Large ribosomal subunit protein uL22 (110 aa).

This sequence belongs to the universal ribosomal protein uL22 family. Part of the 50S ribosomal subunit.

In terms of biological role, this protein binds specifically to 23S rRNA; its binding is stimulated by other ribosomal proteins, e.g. L4, L17, and L20. It is important during the early stages of 50S assembly. It makes multiple contacts with different domains of the 23S rRNA in the assembled 50S subunit and ribosome. The globular domain of the protein is located near the polypeptide exit tunnel on the outside of the subunit, while an extended beta-hairpin is found that lines the wall of the exit tunnel in the center of the 70S ribosome. The protein is Large ribosomal subunit protein uL22 of Syntrophus aciditrophicus (strain SB).